Here is a 258-residue protein sequence, read N- to C-terminus: uncharacterized protein (258 aa).

This is an uncharacterized protein from Caenorhabditis elegans.